We begin with the raw amino-acid sequence, 132 residues long: Small ribosomal subunit protein bS6 (132 aa).

The segment at 96–132 is disordered; it reads HAEGPSIQMQKRDERERGDRGDRPDRGDRGERGGFRR. Positions 105-132 are enriched in basic and acidic residues; it reads QKRDERERGDRGDRPDRGDRGERGGFRR.

Belongs to the bacterial ribosomal protein bS6 family.

Its function is as follows. Binds together with bS18 to 16S ribosomal RNA. This is Small ribosomal subunit protein bS6 from Cereibacter sphaeroides (strain ATCC 17025 / ATH 2.4.3) (Rhodobacter sphaeroides).